Here is a 743-residue protein sequence, read N- to C-terminus: MLPGYTAESKDGAHGYERLHDIILQDSDADGEDDVILFPHAEELANAAVGIDGDDGNGRVVRLGTTQHLDESDSSEDEATLNRVGDIPLEWYKDEKHIGYDIEGKKLMKAERSALERLLEATDDPNAMRTIYDALHDEKKTLSNADLQLIFNLQRNRTTNSNYDMYSGVQEDTVVFDPLNHPLARSSGPSKKAFVPALHDTKVIAKMVRRLRKEEAESKLRPATEEKEDEDQLLWDDGHVEMDTHTHFKYFNRVPKPKVPPPGTFESYRPPPEYLPSERAKQRQARLRTIDRREHFLPQSFDALRHVPFYHHTIQDRYQRCLDLAFFPRAQRTRLVVDPDKLLPELPNPKDLRPYPEKLSFHYKGHTATVRSVSVSPNGQYLATGCDDHLVRVYEVQTGRLMKRYDMGAPVQQVEFCPSKSLNILAAAVEYSLVFVVPTFAAHALVNDHTIRFLRAPGLSAGQREAAHALGAVDTLGGRAVTQTTLDADETAHEATTDLHDVEEREKRAEFLDASAKERNAGIVVKIAMHAKVKKFCFHIKGDYLCALCPKDHVKYRQTIMLQLSKRKVFCPFRKFSEVVTDCRFHPREPLFFLATTNSVRCYNLMAHRLQRRFKASGGVTTCLSIHPEGDNFLVGDTTSHTSWFDMDFSDKPYKRMRSHKGVVNALAFHPKTGAYPLFATGASDGQVHVFHGMVYDDYNKNALVVPVKILKHQRSVYAVAWHPSLAWLFTSTEDGVVTAWTE.

WD repeat units follow at residues 365–404 (GHTATVRSVSVSPNGQYLATGCDDHLVRVYEVQTGRLMKR), 575–615 (KFSE…RRFK), 617–655 (SGGVTTCLSIHPEGDNFLVGDTTSHTSWFDMDFSDKPYK), 659–701 (SHKG…DYNK), and 712–743 (KHQRSVYAVAWHPSLAWLFTSTEDGVVTAWTE).

Belongs to the WD repeat BOP1/ERB1 family.

The protein resides in the nucleus. It localises to the nucleolus. Its subcellular location is the nucleoplasm. Required for maturation of ribosomal RNAs and formation of the large ribosomal subunit. The sequence is that of Ribosome biogenesis protein BOP1 homolog from Leishmania braziliensis.